The chain runs to 141 residues: Small ribosomal subunit protein bS16 (141 aa).

Polar residues-rich tracts occupy residues 89–101 and 109–129; these read NVSVSHAESTEAI and ATANTESNEVSDSESTATATI. Residues 89-141 are disordered; sequence NVSVSHAESTEAITNAEPIQATANTESNEVSDSESTATATIRESEEQPPISES.

Belongs to the bacterial ribosomal protein bS16 family.

The chain is Small ribosomal subunit protein bS16 from Trichodesmium erythraeum (strain IMS101).